Consider the following 401-residue polypeptide: Phosphoglycerate kinase (401 aa).

Residues 24–26 (DFN), arginine 40, 63–66 (HFGR), arginine 122, and arginine 155 contribute to the substrate site. ATP contacts are provided by residues lysine 206, glycine 297, glutamate 328, and 357 to 360 (GGDS).

The protein belongs to the phosphoglycerate kinase family. Monomer.

Its subcellular location is the cytoplasm. It carries out the reaction (2R)-3-phosphoglycerate + ATP = (2R)-3-phospho-glyceroyl phosphate + ADP. It functions in the pathway carbohydrate degradation; glycolysis; pyruvate from D-glyceraldehyde 3-phosphate: step 2/5. The sequence is that of Phosphoglycerate kinase from Acaryochloris marina (strain MBIC 11017).